A 199-amino-acid polypeptide reads, in one-letter code: MSKQNKKDWKKFRDEHKEEHKVENEILEEETDEESQHQEPALGHPSYTALEEQLTLAEQKAHENWEKSVRALAELENVRRRMEREVANAHKYGVEKLISALLPVVDSLEQALQLADKNSDPSMHEGLELTMKLFLDALQKFDVEQIDPLGQTFDPQQHEAMSMQPAPGAPPNSVITVFQKGYKLSDRVIRPARVIVSTK.

Positions 1–24 (MSKQNKKDWKKFRDEHKEEHKVEN) are enriched in basic and acidic residues. The tract at residues 1 to 52 (MSKQNKKDWKKFRDEHKEEHKVENEILEEETDEESQHQEPALGHPSYTALEE) is disordered.

Belongs to the GrpE family. Homodimer.

The protein resides in the cytoplasm. Functionally, participates actively in the response to hyperosmotic and heat shock by preventing the aggregation of stress-denatured proteins, in association with DnaK and GrpE. It is the nucleotide exchange factor for DnaK and may function as a thermosensor. Unfolded proteins bind initially to DnaJ; upon interaction with the DnaJ-bound protein, DnaK hydrolyzes its bound ATP, resulting in the formation of a stable complex. GrpE releases ADP from DnaK; ATP binding to DnaK triggers the release of the substrate protein, thus completing the reaction cycle. Several rounds of ATP-dependent interactions between DnaJ, DnaK and GrpE are required for fully efficient folding. This Legionella pneumophila (strain Lens) protein is Protein GrpE.